Here is a 101-residue protein sequence, read N- to C-terminus: Small ribosomal subunit protein uS14 (101 aa).

The disordered stretch occupies residues 36–72; it reads GTDESREAARAGIQRLPRDASPIRVRNRDGIDGRPRG. Residues 61–70 show a composition bias toward basic and acidic residues; the sequence is RNRDGIDGRP.

Belongs to the universal ribosomal protein uS14 family. In terms of assembly, part of the 30S ribosomal subunit. Contacts proteins S3 and S10.

Its function is as follows. Binds 16S rRNA, required for the assembly of 30S particles and may also be responsible for determining the conformation of the 16S rRNA at the A site. The chain is Small ribosomal subunit protein uS14 from Clavibacter michiganensis subsp. michiganensis (strain NCPPB 382).